Reading from the N-terminus, the 437-residue chain is Serine carboxypeptidase-like 7 (437 aa).

A signal peptide spans 1 to 25; sequence MANDYVSTVLLLLSLLIFLSQRTDS. Cystine bridges form between Cys-84–Cys-327, Cys-248–Cys-262, and Cys-286–Cys-293. Asn-105 is a glycosylation site (N-linked (GlcNAc...) asparagine). Ser-180 is a catalytic residue. Residue Asn-346 is glycosylated (N-linked (GlcNAc...) asparagine). Residue Asp-362 is part of the active site. Asn-378 carries N-linked (GlcNAc...) asparagine glycosylation. His-415 is an active-site residue.

Belongs to the peptidase S10 family. In terms of tissue distribution, ubiquitous.

The protein localises to the secreted. Functionally, probable carboxypeptidase. The sequence is that of Serine carboxypeptidase-like 7 (SCPL7) from Arabidopsis thaliana (Mouse-ear cress).